Here is a 65-residue protein sequence, read N- to C-terminus: Large ribosomal subunit protein bL35 (65 aa).

Residues 1–25 (MPKLKTKSSAAKRFKKTGKGGFKHR) are disordered.

Belongs to the bacterial ribosomal protein bL35 family.

The sequence is that of Large ribosomal subunit protein bL35 from Francisella tularensis subsp. holarctica (strain FTNF002-00 / FTA).